We begin with the raw amino-acid sequence, 253 residues long: Core protein VP8 (253 aa).

The propeptide occupies 1–31 (MNDLLLENLFGEKALCAQVTRDQLLEIIAAG).

This sequence belongs to the chordopoxvirinae VP8 family. Undergoes morphogenesis-associated proteolysis which cleaves the 28 kDa to a 25-kDa product. Proteolytic cleavage of major core proteins P4a (A10L), P4b (A3L), and VP8 (L4R), which occurs at a late stage of core formation, is required for production of infectious mature virions (MV).

The protein resides in the virion. Functionally, major core structural protein. The polypeptide is Core protein VP8 (Vertebrata (FPV)).